The chain runs to 177 residues: Large ribosomal subunit protein uL6 (177 aa).

The protein belongs to the universal ribosomal protein uL6 family. Part of the 50S ribosomal subunit.

This protein binds to the 23S rRNA, and is important in its secondary structure. It is located near the subunit interface in the base of the L7/L12 stalk, and near the tRNA binding site of the peptidyltransferase center. This chain is Large ribosomal subunit protein uL6, found in Mesorhizobium japonicum (strain LMG 29417 / CECT 9101 / MAFF 303099) (Mesorhizobium loti (strain MAFF 303099)).